Here is a 341-residue protein sequence, read N- to C-terminus: Glycerol-3-phosphate dehydrogenase [NAD(P)+] (341 aa).

The NADPH site is built by Ser-14, Phe-15, Arg-35, and Lys-108. Sn-glycerol 3-phosphate-binding residues include Lys-108 and Gly-136. Ala-140 is an NADPH binding site. Sn-glycerol 3-phosphate is bound by residues Lys-191, Asp-244, Ser-254, Arg-255, and Asn-256. The Proton acceptor role is filled by Lys-191. Arg-255 serves as a coordination point for NADPH. 2 residues coordinate NADPH: Val-279 and Glu-281.

It belongs to the NAD-dependent glycerol-3-phosphate dehydrogenase family.

The protein localises to the cytoplasm. It catalyses the reaction sn-glycerol 3-phosphate + NAD(+) = dihydroxyacetone phosphate + NADH + H(+). The catalysed reaction is sn-glycerol 3-phosphate + NADP(+) = dihydroxyacetone phosphate + NADPH + H(+). It participates in membrane lipid metabolism; glycerophospholipid metabolism. Catalyzes the reduction of the glycolytic intermediate dihydroxyacetone phosphate (DHAP) to sn-glycerol 3-phosphate (G3P), the key precursor for phospholipid synthesis. The polypeptide is Glycerol-3-phosphate dehydrogenase [NAD(P)+] (Pseudomonas fluorescens (strain ATCC BAA-477 / NRRL B-23932 / Pf-5)).